Consider the following 141-residue polypeptide: Nucleoside diphosphate kinase (141 aa).

The ATP site is built by lysine 11, phenylalanine 59, arginine 87, threonine 93, arginine 104, and asparagine 114. The Pros-phosphohistidine intermediate role is filled by histidine 117.

It belongs to the NDK family. In terms of assembly, homotetramer. Mg(2+) is required as a cofactor.

The protein resides in the cytoplasm. It carries out the reaction a 2'-deoxyribonucleoside 5'-diphosphate + ATP = a 2'-deoxyribonucleoside 5'-triphosphate + ADP. It catalyses the reaction a ribonucleoside 5'-diphosphate + ATP = a ribonucleoside 5'-triphosphate + ADP. Functionally, major role in the synthesis of nucleoside triphosphates other than ATP. The ATP gamma phosphate is transferred to the NDP beta phosphate via a ping-pong mechanism, using a phosphorylated active-site intermediate. The polypeptide is Nucleoside diphosphate kinase (Actinobacillus succinogenes (strain ATCC 55618 / DSM 22257 / CCUG 43843 / 130Z)).